A 545-amino-acid polypeptide reads, in one-letter code: E3 ubiquitin-protein ligase ipaH9.8 (545 aa).

An interaction with target proteins region spans residues 1-242 (MLPINNNFSL…YHGPRIYFSM (242 aa)). LRR repeat units lie at residues 57 to 77 (NSDE…NLPA), 78 to 99 (QITL…PVTL), 100 to 117 (KKLY…VLPP), 118 to 139 (ALES…PDSL), 140 to 157 (LTMN…SLPQ), 158 to 179 (ALKN…SEGN), 182 to 203 (VVRE…ILNL), and 205 to 228 (NECS…QRLT). The tract at residues 243–250 (SDGQQNTL) is linker. The tract at residues 251 to 545 (HRPLADAVTA…SENGSQLHHS (295 aa)) is E3 ubiquitin-protein ligase catalytic domain. The NEL domain occupies 253-545 (PLADAVTAWF…SENGSQLHHS (293 aa)). The active-site Glycyl thioester intermediate is the Cys-337.

The protein belongs to the LRR-containing bacterial E3 ligase family. As to quaternary structure, also interacts with human and mouse U2AF1 (U2AF35). Ubiquitinated in the presence of host E1 ubiquitin-activating enzyme, E2 ubiquitin-conjugating enzyme and ubiquitin.

The protein resides in the secreted. It localises to the host cytoplasm. The protein localises to the host nucleus. The enzyme catalyses S-ubiquitinyl-[E2 ubiquitin-conjugating enzyme]-L-cysteine + [acceptor protein]-L-lysine = [E2 ubiquitin-conjugating enzyme]-L-cysteine + N(6)-ubiquitinyl-[acceptor protein]-L-lysine.. With respect to regulation, exists in an autoinhibited state in the absence of substrate protein, due to interactions of the leucine-rich repeats with NEL domain. Is activated upon binding to a substrate protein. Functionally, effector E3 ubiquitin ligase that interferes with host's ubiquitination pathway and modulates the acute inflammatory responses, thus facilitating bacterial colonization within the host cell. Interacts with IKBKG (NEMO) and TNIP1 (ABIN-1), a ubiquitin-binding adapter protein, which results in TNIP1-dependent 'Lys-27'-linked polyubiquitination of IKBKG. Consequently, polyubiquitinated IKBKG undergoes proteasome-dependent degradation, which perturbs NF-kappa-B activation during bacterial infection. Mediates polyubiquitination of host U2AF1, leading to its proteasomal degradation. Catalyzes 'Lys-48'-linked polyubiquitination and subsequent degradation of a subset of host guanylate-binding proteins (GBP1, GBP2, GBP4 and GBP6), thereby suppressing host cell defense. In contrast, host GBP3 and GBP7 are not ubiquitinated by IpaH9.8. Uses UBE2D2 (UBCH5B) as an E2 ubiquitin-conjugating enzyme. This is E3 ubiquitin-protein ligase ipaH9.8 (ipaH9.8) from Shigella dysenteriae serotype 1 (strain Sd197).